A 318-amino-acid polypeptide reads, in one-letter code: Olfactory receptor 51E1 (318 aa).

Residues 1 to 31 are Extracellular-facing; the sequence is MMVDPNGNESSATYFILIGLPGLEEAQFWLA. Residue asparagine 8 is glycosylated (N-linked (GlcNAc...) asparagine). The helical transmembrane segment at 32–52 threads the bilayer; sequence FPLCSLYLIAVLGNLTIIYIV. Over 53–60 the chain is Cytoplasmic; sequence RTEHSLHE. A helical transmembrane segment spans residues 61–81; sequence PMYIFLCMLSGIDILISTSSM. The Extracellular portion of the chain corresponds to 82–100; the sequence is PKMLAIFWFNSTTIQFDAC. N-linked (GlcNAc...) asparagine glycosylation is present at asparagine 91. A disulfide bond links cysteine 100 and cysteine 182. A helical transmembrane segment spans residues 101 to 123; the sequence is LLQMFAIHSLSGMESTVLLAMAF. The Cytoplasmic portion of the chain corresponds to 124–145; sequence DRYVAICHPLRHATVLTLPRVT. A helical membrane pass occupies residues 146 to 166; the sequence is KIGVAAVVRGAALMAPLPVFI. Residues 167 to 198 lie on the Extracellular side of the membrane; it reads KQLPFCRSNILSHSYCLHQDVMKLACDDIRVN. Residues 199-219 traverse the membrane as a helical segment; the sequence is VVYGLIVIISAIGLDSLLISF. At 220 to 239 the chain is on the cytoplasmic side; that stretch reads SYLLILKTVLGLTREAQAKA. A helical transmembrane segment spans residues 240–260; the sequence is FGTCVSHVCAVFIFYVPFIGL. At 261-275 the chain is on the extracellular side; that stretch reads SMVHRFSKRRDSPLP. A helical transmembrane segment spans residues 276–296; that stretch reads VILANIYLLVPPVLNPIVYGV. Residues 297–318 are Cytoplasmic-facing; sequence KTKEIRQRILRLFHVATHASEP.

The protein belongs to the G-protein coupled receptor 1 family. As to expression, highly expressed in prostate. Very low levels may be detected in some other tissues, such as placenta, skeletal muscle, heart, ovary and testis. Up-regulated in prostate cancers.

Its subcellular location is the cell membrane. Odorant receptor. This chain is Olfactory receptor 51E1 (OR51E1), found in Homo sapiens (Human).